A 342-amino-acid chain; its full sequence is MADDLEQQPQGWLSSWLPTWRPTSMSQLKNVEARILQCLQNKFLARYVSLPNQNKIWTVTVSPEQKDRTPLVMVHGFGGGVGLWILNMDSLSARRTLHTFDLLGFGRSSRPTFPRDPEGAEDEFVASIETWRETMGIPTMILLGHSLGGFLATSYSIKYPERVKHLILVDPWGFPLRPTDPSEIRAPPTWVKAVASVLGRSNPLAVLRVAGPWGPGLVQRFRPDFKRKFADFFEDDTISEYIYHCNAQNPSGETAFKAMMESFGWARRPMLERIHLIRKDVPITMIYGANTWIDTSTGKKVKMQRPDSYVRDMEIEGASHHVYADQPHIFNAVVEEICNSVD.

Positions Pro70–Tyr323 constitute an AB hydrolase-1 domain.

It belongs to the peptidase S33 family. ABHD4/ABHD5 subfamily. Highest levels in the CNS and in testis, intermediate levels in liver and kidney. Hardly detectable in heart.

It catalyses the reaction N-hexadecanoyl-1,2-di-(9Z-octadecenoyl)-sn-glycero-3-phosphoethanolamine + H2O = N-hexadecanoyl-1-(9Z-octadecenoyl)-sn-glycero-3-phosphoethanolamine + (9Z)-octadecenoate + H(+). The catalysed reaction is an N-acyl-1,2-diacyl-sn-glycero-3-phosphoethanolamine + H2O = N,1-diacyl-sn-glycero-3-phosphoethanolamine + a fatty acid + H(+). It carries out the reaction N-hexadecanoyl-1-(9Z-octadecenoyl)-sn-glycero-3-phosphoethanolamine + H2O = N-hexadecanoyl-sn-glycero-3-phosphoethanolamine + (9Z)-octadecenoate + H(+). The enzyme catalyses N-octadecanoyl-1-(9Z-octadecenoyl)-sn-glycero-3-phosphoethanolamine + H2O = N-octadecanoyl-sn-glycero-3-phospho-ethanolamine + (9Z)-octadecenoate + H(+). It catalyses the reaction N-eicosanoyl-1-(9Z-octadecenoyl)-sn-glycero-3-phosphoethanolamine + H2O = N-eicosanoyl-sn-glycero-3-phosphoethanolamine + (9Z)-octadecenoate + H(+). The catalysed reaction is N,1-di-(9Z-octadecenoyl)-sn-glycero-3-phosphoethanolamine + H2O = N-(9Z-octadecenoyl)-sn-glycero-3-phosphoethanolamine + (9Z)-octadecenoate + H(+). It carries out the reaction N-(5Z,8Z,11Z,14Z-eicosatetraenoyl)-1-(9Z-octadecenoyl)-sn-glycero-3-phosphoethanolamine + H2O = N-(5Z,8Z,11Z,14Z-eicosatetraenoyl)-sn-glycero-3-phosphoethanolamine + (9Z)-octadecenoate + H(+). The enzyme catalyses 1-octadecanoyl-2-(9Z-octadecenoyl)-sn-glycero-3-phospho-(N-hexadecanoyl)-serine + H2O = 1-octadecanoyl-2-hydroxy-sn-glycero-3-phospho-(N-hexadecanoyl)-serine + (9Z)-octadecenoate + H(+). It catalyses the reaction 1-O-(1Z-octadecenoyl)-2-(9Z-octadecenoyl)-sn-glycero-3-phospho-N-hexadecanoyl-ethanolamine + H2O = 1-O-(1Z-octadecenyl)-sn-glycero-3-phospho-N-hexadecanoyl-ethanolamine + (9Z)-octadecenoate + H(+). The catalysed reaction is N,1-diacyl-sn-glycero-3-phosphoethanolamine + H2O = N-acyl-sn-glycero-3-phosphoethanolamine + a fatty acid + H(+). In terms of biological role, lysophospholipase selective for N-acyl phosphatidylethanolamine (NAPE). Contributes to the biosynthesis of N-acyl ethanolamines, including the endocannabinoid anandamide by hydrolyzing the sn-1 and sn-2 acyl chains from N-acyl phosphatidylethanolamine (NAPE) generating glycerophospho-N-acyl ethanolamine (GP-NAE), an intermediate for N-acyl ethanolamine biosynthesis. Hydrolyzes substrates bearing saturated, monounsaturated, polyunsaturated N-acyl chains. Shows no significant activity towards other lysophospholipids, including lysophosphatidylcholine, lysophosphatidylethanolamine and lysophosphatidylserine. This Mus musculus (Mouse) protein is (Lyso)-N-acylphosphatidylethanolamine lipase.